Here is a 293-residue protein sequence, read N- to C-terminus: NAD kinase (293 aa).

Aspartate 74 acts as the Proton acceptor in catalysis. NAD(+) contacts are provided by residues 74–75, arginine 79, 148–149, arginine 176, aspartate 178, 189–194, and glutamine 248; these read DG, NE, and TAYALS.

This sequence belongs to the NAD kinase family. It depends on a divalent metal cation as a cofactor.

The protein resides in the cytoplasm. The enzyme catalyses NAD(+) + ATP = ADP + NADP(+) + H(+). In terms of biological role, involved in the regulation of the intracellular balance of NAD and NADP, and is a key enzyme in the biosynthesis of NADP. Catalyzes specifically the phosphorylation on 2'-hydroxyl of the adenosine moiety of NAD to yield NADP. This Blochmanniella floridana protein is NAD kinase.